A 74-amino-acid chain; its full sequence is Translation initiation factor IF-1 (74 aa).

In terms of domain architecture, S1-like spans 1-72 (MSKEDAIEVE…NKGRITYRLK (72 aa)).

This sequence belongs to the IF-1 family. As to quaternary structure, component of the 30S ribosomal translation pre-initiation complex which assembles on the 30S ribosome in the order IF-2 and IF-3, IF-1 and N-formylmethionyl-tRNA(fMet); mRNA recruitment can occur at any time during PIC assembly.

It is found in the cytoplasm. Functionally, one of the essential components for the initiation of protein synthesis. Stabilizes the binding of IF-2 and IF-3 on the 30S subunit to which N-formylmethionyl-tRNA(fMet) subsequently binds. Helps modulate mRNA selection, yielding the 30S pre-initiation complex (PIC). Upon addition of the 50S ribosomal subunit IF-1, IF-2 and IF-3 are released leaving the mature 70S translation initiation complex. The chain is Translation initiation factor IF-1 from Synechococcus sp. (strain JA-3-3Ab) (Cyanobacteria bacterium Yellowstone A-Prime).